Here is a 152-residue protein sequence, read N- to C-terminus: Dimethylsulfoniopropionate lyase DddW (152 aa).

The Cupin type-2 domain occupies 69 to 124; it reads IAEFGPGHQLRPHRHTPPEFYLGLEGSGIVTIDGVPHEIRAGVALYIPGDAEHGTV. Fe cation is bound by residues histidine 83, glutamate 87, tyrosine 89, and histidine 121.

The protein belongs to the non-heme iron-dependent dioxygenase family. Homodimer. Fe(2+) is required as a cofactor.

It catalyses the reaction S,S-dimethyl-beta-propiothetin = acrylate + dimethyl sulfide + H(+). Able to cleave dimethylsulfoniopropionate (DMSP), releasing dimethyl sulfide (DMS) and acrylate. DMS is the principal form by which sulfur is transported from oceans to the atmosphere. The sequence is that of Dimethylsulfoniopropionate lyase DddW from Ruegeria pomeroyi (strain ATCC 700808 / DSM 15171 / DSS-3) (Silicibacter pomeroyi).